The chain runs to 244 residues: Ribonuclease 3 (244 aa).

The 132-residue stretch at 5 to 136 folds into the RNase III domain; sequence LAELERAIGI…LVGAIYLDQG (132 aa). Glu-49 lines the Mg(2+) pocket. Residue Asp-53 is part of the active site. Residues Asp-122 and Glu-125 each coordinate Mg(2+). Glu-125 is an active-site residue. In terms of domain architecture, DRBM spans 161 to 229; the sequence is DPTTRLQELM…ARKALAAWDK (69 aa).

The protein belongs to the ribonuclease III family. As to quaternary structure, homodimer. Mg(2+) serves as cofactor.

It localises to the cytoplasm. The catalysed reaction is Endonucleolytic cleavage to 5'-phosphomonoester.. Functionally, digests double-stranded RNA. Involved in the processing of primary rRNA transcript to yield the immediate precursors to the large and small rRNAs (23S and 16S). Processes some mRNAs, and tRNAs when they are encoded in the rRNA operon. Processes pre-crRNA and tracrRNA of type II CRISPR loci if present in the organism. This Chloroflexus aurantiacus (strain ATCC 29364 / DSM 637 / Y-400-fl) protein is Ribonuclease 3.